A 394-amino-acid polypeptide reads, in one-letter code: Mucosal addressin cell adhesion molecule 1 (394 aa).

The first 19 residues, 1–19 (MEPILALLLALGPFQLSRG), serve as a signal peptide directing secretion. Ig-like domains follow at residues 20-107 (QSFQ…ILVY), 108-225 (AFPD…TSPE), and 256-345 (PSTP…YVTG). The Extracellular portion of the chain corresponds to 20–353 (QSFQVNPPEP…TGQVIPNPSS (334 aa)). Residue asparagine 42 is glycosylated (N-linked (GlcNAc...) asparagine). Intrachain disulfides connect cysteine 43-cysteine 89, cysteine 47-cysteine 93, and cysteine 130-cysteine 198. A mucin-like region spans residues 219-255 (QSQTSPEPPSTTSAKPYILTSSHTTKAVSTGLSSVAL). Cysteine 282 and cysteine 330 are oxidised to a cystine. The chain crosses the membrane as a helical span at residues 354-374 (MVALWIGSLVLGLLALAFLAY). The Cytoplasmic segment spans residues 375–394 (CLWKRYRPGPLPDSSSCTLL).

In terms of assembly, homodimer. Detected in Peyer patches and mesenteric lymph nodes but not in spleen.

It is found in the membrane. Cell adhesion leukocyte receptor expressed by mucosal venules, helps to direct lymphocyte traffic into mucosal tissues including the Peyer patches and the intestinal lamina propria. It can bind both the integrin alpha-4/beta-7 and L-selectin, regulating both the passage and retention of leukocytes. This is Mucosal addressin cell adhesion molecule 1 (Madcam1) from Rattus norvegicus (Rat).